The chain runs to 220 residues: Thymidylate kinase (220 aa).

Residue 10 to 17 coordinates ATP; the sequence is GIDGCGKS.

This sequence belongs to the thymidylate kinase family.

It catalyses the reaction dTMP + ATP = dTDP + ADP. Functionally, phosphorylation of dTMP to form dTDP in both de novo and salvage pathways of dTTP synthesis. The chain is Thymidylate kinase from Prochlorococcus marinus (strain SARG / CCMP1375 / SS120).